The primary structure comprises 769 residues: Cap-specific mRNA (nucleoside-2'-O-)-methyltransferase 2 (769 aa).

Residues 109-322 (ELCTQAWCKF…VYVVCLYYKG (214 aa)) enclose the Adrift-type SAM-dependent 2'-O-MTase domain. K117 is an active-site residue. Residues G148, W167, and D235 each contribute to the S-adenosyl-L-methionine site. D235 is a catalytic residue. Catalysis depends on K275, which acts as the Proton acceptor.

It localises to the nucleus. Its subcellular location is the cytoplasm. The catalysed reaction is a 5'-end (N(7)-methyl 5'-triphosphoguanosine)-(2'-O-methyl-ribonucleoside)-(ribonucleotide) in mRNA + S-adenosyl-L-methionine = a 5'-end (N(7)-methyl 5'-triphosphoguanosine)-(2'-O-methyl-ribonucleoside)-(2'-O-methyl-ribonucleotide) in mRNA + S-adenosyl-L-homocysteine + H(+). Functionally, S-adenosyl-L-methionine-dependent methyltransferase that mediates mRNA cap2 2'-O-ribose methylation to the 5'-cap structure of mRNAs. Methylates the ribose of the second nucleotide of a m(7)GpppG-capped mRNA and small nuclear RNA (snRNA) (cap0) to produce m(7)GpppRmpNm (cap2). Recognizes a guanosine cap on RNA independently of its N(7) methylation status. Display cap2 methylation on both cap0 and cap1. Displays a preference for cap1 RNAs. The protein is Cap-specific mRNA (nucleoside-2'-O-)-methyltransferase 2 (CMTR2) of Pongo abelii (Sumatran orangutan).